Here is a 155-residue protein sequence, read N- to C-terminus: SsrA-binding protein (155 aa).

It belongs to the SmpB family.

It is found in the cytoplasm. Its function is as follows. Required for rescue of stalled ribosomes mediated by trans-translation. Binds to transfer-messenger RNA (tmRNA), required for stable association of tmRNA with ribosomes. tmRNA and SmpB together mimic tRNA shape, replacing the anticodon stem-loop with SmpB. tmRNA is encoded by the ssrA gene; the 2 termini fold to resemble tRNA(Ala) and it encodes a 'tag peptide', a short internal open reading frame. During trans-translation Ala-aminoacylated tmRNA acts like a tRNA, entering the A-site of stalled ribosomes, displacing the stalled mRNA. The ribosome then switches to translate the ORF on the tmRNA; the nascent peptide is terminated with the 'tag peptide' encoded by the tmRNA and targeted for degradation. The ribosome is freed to recommence translation, which seems to be the essential function of trans-translation. This Ligilactobacillus salivarius (strain UCC118) (Lactobacillus salivarius) protein is SsrA-binding protein.